Here is a 140-residue protein sequence, read N- to C-terminus: Holo-[acyl-carrier-protein] synthase (140 aa).

Residues Asp-8 and Glu-62 each contribute to the Mg(2+) site.

Belongs to the P-Pant transferase superfamily. AcpS family. Requires Mg(2+) as cofactor.

The protein resides in the cytoplasm. It catalyses the reaction apo-[ACP] + CoA = holo-[ACP] + adenosine 3',5'-bisphosphate + H(+). In terms of biological role, transfers the 4'-phosphopantetheine moiety from coenzyme A to a Ser of acyl-carrier-protein. In Cupriavidus pinatubonensis (strain JMP 134 / LMG 1197) (Cupriavidus necator (strain JMP 134)), this protein is Holo-[acyl-carrier-protein] synthase.